Reading from the N-terminus, the 76-residue chain is Large ribosomal subunit protein bL31 (76 aa).

It belongs to the bacterial ribosomal protein bL31 family. Type A subfamily. In terms of assembly, part of the 50S ribosomal subunit.

Its function is as follows. Binds the 23S rRNA. The sequence is that of Large ribosomal subunit protein bL31 from Rhizorhabdus wittichii (strain DSM 6014 / CCUG 31198 / JCM 15750 / NBRC 105917 / EY 4224 / RW1) (Sphingomonas wittichii).